The sequence spans 208 residues: NAD(P)H-quinone oxidoreductase subunit I (208 aa).

4Fe-4S ferredoxin-type domains follow at residues Gly-55–Val-84 and Arg-95–Glu-124. [4Fe-4S] cluster-binding residues include Cys-64, Cys-67, Cys-70, Cys-74, Cys-104, Cys-107, Cys-110, and Cys-114.

It belongs to the complex I 23 kDa subunit family. NDH-1 is composed of at least 11 different subunits. [4Fe-4S] cluster serves as cofactor.

It is found in the cellular thylakoid membrane. The enzyme catalyses a plastoquinone + NADH + (n+1) H(+)(in) = a plastoquinol + NAD(+) + n H(+)(out). The catalysed reaction is a plastoquinone + NADPH + (n+1) H(+)(in) = a plastoquinol + NADP(+) + n H(+)(out). NDH-1 shuttles electrons from an unknown electron donor, via FMN and iron-sulfur (Fe-S) centers, to quinones in the respiratory and/or the photosynthetic chain. The immediate electron acceptor for the enzyme in this species is believed to be plastoquinone. Couples the redox reaction to proton translocation, and thus conserves the redox energy in a proton gradient. This is NAD(P)H-quinone oxidoreductase subunit I from Prochlorococcus marinus (strain MIT 9515).